Reading from the N-terminus, the 232-residue chain is Histone H1A (232 aa).

Residues 1 to 18 (MSDPAVEVTPAVPVASPA) show a composition bias toward low complexity. 2 disordered regions span residues 1-42 (MSDP…THLP) and 98-232 (LQTK…AKKA). The H15 domain occupies 39–113 (THLPVSDMVV…GASGSFKLPA (75 aa)). Composition is skewed to basic residues over residues 131-141 (KPKKAAAPKPK), 147-173 (KVKK…KTTK), 181-214 (AAKK…KAKK), and 222-232 (KAAKKPAAKKA).

The protein belongs to the histone H1/H5 family.

It localises to the nucleus. Its subcellular location is the chromosome. In terms of biological role, histones H1 are necessary for the condensation of nucleosome chains into higher-order structures. This Chironomus tentans (Midge) protein is Histone H1A.